A 367-amino-acid polypeptide reads, in one-letter code: MAVANLTTEQAILSEVHKQNRNRRALRLWLGFVLLALFCLVLVGGATRLTNSGLSITEWKPIHGVIPPLSAAEWDEEFRLYQRIPEFQQLNSSMTVDEFKSIFWWEWAHRLIARGIGVIFALPLLYFWLTGRIEKRLRWPLVGILALGALQGFIGWWMVSSGLSVRTDVSQYRLATHLVMACLIFAGCMWIMRGLSPHSNDPAPARSSRGLAAAIAVFALFQIYLGALVAGLDAGFSYNTWPLMDGAVIPSDLLIQQPFWINAFENPKTVQFIHRIGAYTLFALVLINMVIALRTAPWTTHARRAVLLFALVTVQAAIGVATLLMQVPLHWGLLHQAGALVVFGFAVANWRGFYGEYPHETMIAERD.

Helical transmembrane passes span 25–45 (ALRL…LVGG), 111–131 (LIAR…WLTG), 139–159 (WPLV…WWMV), 174–194 (LATH…IMRG), 210–230 (GLAA…ALVA), 272–292 (FIHR…MVIA), 305–325 (AVLL…TLLM), and 327–347 (VPLH…GFAV). Residue His274 participates in heme binding. His335 is a binding site for heme.

The protein belongs to the COX15/CtaA family. Type 2 subfamily. Interacts with CtaB. Requires heme b as cofactor.

The protein resides in the cell membrane. The catalysed reaction is Fe(II)-heme o + 2 A + H2O = Fe(II)-heme a + 2 AH2. The protein operates within porphyrin-containing compound metabolism; heme A biosynthesis; heme A from heme O: step 1/1. Its function is as follows. Catalyzes the conversion of heme O to heme A by two successive hydroxylations of the methyl group at C8. The first hydroxylation forms heme I, the second hydroxylation results in an unstable dihydroxymethyl group, which spontaneously dehydrates, resulting in the formyl group of heme A. The polypeptide is Heme A synthase (Rhizobium etli (strain ATCC 51251 / DSM 11541 / JCM 21823 / NBRC 15573 / CFN 42)).